The following is a 544-amino-acid chain: Chaperonin GroEL (544 aa).

ATP-binding positions include 29–32, 86–90, Gly413, 476–478, and Asp492; these read TLGP, DGTTT, and NAL.

This sequence belongs to the chaperonin (HSP60) family. As to quaternary structure, forms a cylinder of 14 subunits composed of two heptameric rings stacked back-to-back. Interacts with the co-chaperonin GroES.

Its subcellular location is the cytoplasm. It catalyses the reaction ATP + H2O + a folded polypeptide = ADP + phosphate + an unfolded polypeptide.. Together with its co-chaperonin GroES, plays an essential role in assisting protein folding. The GroEL-GroES system forms a nano-cage that allows encapsulation of the non-native substrate proteins and provides a physical environment optimized to promote and accelerate protein folding. In Desulfitobacterium hafniense (strain DSM 10664 / DCB-2), this protein is Chaperonin GroEL.